The primary structure comprises 491 residues: Ketol-acid reductoisomerase (NADP(+)) (491 aa).

The KARI N-terminal Rossmann domain occupies 15–208; the sequence is AQLGKCRFMA…GGHRAGVLES (194 aa). NADP(+) contacts are provided by residues 45–48, R68, R76, S78, and 108–110; these read CGAQ and DKQ. The active site involves H132. G158 lines the NADP(+) pocket. 2 consecutive KARI C-terminal knotted domains span residues 209–344 and 345–484; these read SFVA…TAPQ and YEGK…MTDM. 4 residues coordinate Mg(2+): D217, E221, E389, and E393. Residue S414 participates in substrate binding.

Belongs to the ketol-acid reductoisomerase family. The cofactor is Mg(2+).

The enzyme catalyses (2R)-2,3-dihydroxy-3-methylbutanoate + NADP(+) = (2S)-2-acetolactate + NADPH + H(+). It carries out the reaction (2R,3R)-2,3-dihydroxy-3-methylpentanoate + NADP(+) = (S)-2-ethyl-2-hydroxy-3-oxobutanoate + NADPH + H(+). It participates in amino-acid biosynthesis; L-isoleucine biosynthesis; L-isoleucine from 2-oxobutanoate: step 2/4. Its pathway is amino-acid biosynthesis; L-valine biosynthesis; L-valine from pyruvate: step 2/4. Functionally, involved in the biosynthesis of branched-chain amino acids (BCAA). Catalyzes an alkyl-migration followed by a ketol-acid reduction of (S)-2-acetolactate (S2AL) to yield (R)-2,3-dihydroxy-isovalerate. In the isomerase reaction, S2AL is rearranged via a Mg-dependent methyl migration to produce 3-hydroxy-3-methyl-2-ketobutyrate (HMKB). In the reductase reaction, this 2-ketoacid undergoes a metal-dependent reduction by NADPH to yield (R)-2,3-dihydroxy-isovalerate. This Klebsiella pneumoniae subsp. pneumoniae (strain ATCC 700721 / MGH 78578) protein is Ketol-acid reductoisomerase (NADP(+)).